Consider the following 174-residue polypeptide: RNA pyrophosphohydrolase (174 aa).

The Nudix hydrolase domain maps to Gly6–Lys149. The short motif at Gly38–Gly59 is the Nudix box element.

Belongs to the Nudix hydrolase family. RppH subfamily. The cofactor is a divalent metal cation.

Its function is as follows. Accelerates the degradation of transcripts by removing pyrophosphate from the 5'-end of triphosphorylated RNA, leading to a more labile monophosphorylated state that can stimulate subsequent ribonuclease cleavage. The polypeptide is RNA pyrophosphohydrolase (Neisseria meningitidis serogroup A / serotype 4A (strain DSM 15465 / Z2491)).